The primary structure comprises 430 residues: Enolase (430 aa).

Gln162 lines the (2R)-2-phosphoglycerate pocket. Glu204 serves as the catalytic Proton donor. Positions 242, 289, and 316 each coordinate Mg(2+). The (2R)-2-phosphoglycerate site is built by Lys341, Arg370, Ser371, and Lys392. Residue Lys341 is the Proton acceptor of the active site.

This sequence belongs to the enolase family. Mg(2+) serves as cofactor.

The protein localises to the cytoplasm. It localises to the secreted. Its subcellular location is the cell surface. The catalysed reaction is (2R)-2-phosphoglycerate = phosphoenolpyruvate + H2O. The protein operates within carbohydrate degradation; glycolysis; pyruvate from D-glyceraldehyde 3-phosphate: step 4/5. Functionally, catalyzes the reversible conversion of 2-phosphoglycerate (2-PG) into phosphoenolpyruvate (PEP). It is essential for the degradation of carbohydrates via glycolysis. The chain is Enolase from Flavobacterium johnsoniae (strain ATCC 17061 / DSM 2064 / JCM 8514 / BCRC 14874 / CCUG 350202 / NBRC 14942 / NCIMB 11054 / UW101) (Cytophaga johnsonae).